An 87-amino-acid polypeptide reads, in one-letter code: UPF0250 protein BUsg_472 (87 aa).

Belongs to the UPF0250 family.

This Buchnera aphidicola subsp. Schizaphis graminum (strain Sg) protein is UPF0250 protein BUsg_472.